A 573-amino-acid chain; its full sequence is Methionine--tRNA ligase (573 aa).

The short motif at 10–20 (PYVNSVPHLGN) is the 'HIGH' region element. Zn(2+)-binding residues include Cys143, Cys146, Cys156, and Cys159. A 'KMSKS' region motif is present at residues 333-337 (KFSKS). Residue Lys336 coordinates ATP.

The protein belongs to the class-I aminoacyl-tRNA synthetase family. MetG type 1 subfamily. The cofactor is Zn(2+).

It is found in the cytoplasm. It carries out the reaction tRNA(Met) + L-methionine + ATP = L-methionyl-tRNA(Met) + AMP + diphosphate. Is required not only for elongation of protein synthesis but also for the initiation of all mRNA translation through initiator tRNA(fMet) aminoacylation. The sequence is that of Methionine--tRNA ligase from Saccharolobus solfataricus (strain ATCC 35092 / DSM 1617 / JCM 11322 / P2) (Sulfolobus solfataricus).